Reading from the N-terminus, the 456-residue chain is uncharacterized protein (456 aa).

Positions 3–61 (TIKKNEVKTGKVIDLTHEGHGVVKVDRYPIFIPNALIDEEIKFKLIKVKKNFAIGKLIE) constitute a TRAM domain. [4Fe-4S] cluster is bound by residues Cys74, Cys80, Cys83, and Cys162. S-adenosyl-L-methionine is bound by residues Gln286, Tyr315, Glu336, and Asp384. The active-site Nucleophile is the Cys411.

It belongs to the class I-like SAM-binding methyltransferase superfamily. RNA M5U methyltransferase family.

This is an uncharacterized protein from Staphylococcus epidermidis (strain ATCC 12228 / FDA PCI 1200).